Here is a 413-residue protein sequence, read N- to C-terminus: Transcription factor bHLH23 (413 aa).

The tract at residues 40–75 (SSQTQTPSCDPPLILRGSGSGDGEGNGPLPQPPPPL) is disordered. Phosphothreonine is present on T186. At S191 the chain carries Phosphoserine. Disordered regions lie at residues 232-278 (TEPV…RSRA) and 391-413 (ETEQ…KMFS). The segment covering 246-257 (TDERKRKTREET) has biased composition (basic and acidic residues). A bHLH domain is found at 277–326 (RAAIMHKLSERRRRQKINEMMKALQELLPRCTKTDRSSMLDDVIEYVKSL).

In terms of assembly, homodimer. In terms of tissue distribution, expressed constitutively in leaves, stems, and flowers.

The protein resides in the nucleus. The protein is Transcription factor bHLH23 (BHLH23) of Arabidopsis thaliana (Mouse-ear cress).